A 416-amino-acid chain; its full sequence is Dihydroorotase (416 aa).

2 residues coordinate Zn(2+): H53 and H55. Residues 55-57 and N87 each bind substrate; that span reads HLR. Zn(2+)-binding residues include D145, H172, H225, and D298. Residue D298 is part of the active site. H302 is a binding site for substrate.

The protein belongs to the metallo-dependent hydrolases superfamily. DHOase family. Class I DHOase subfamily. Zn(2+) serves as cofactor.

It catalyses the reaction (S)-dihydroorotate + H2O = N-carbamoyl-L-aspartate + H(+). It functions in the pathway pyrimidine metabolism; UMP biosynthesis via de novo pathway; (S)-dihydroorotate from bicarbonate: step 3/3. Functionally, catalyzes the reversible cyclization of carbamoyl aspartate to dihydroorotate. The chain is Dihydroorotase from Deinococcus radiodurans (strain ATCC 13939 / DSM 20539 / JCM 16871 / CCUG 27074 / LMG 4051 / NBRC 15346 / NCIMB 9279 / VKM B-1422 / R1).